The primary structure comprises 178 residues: ATP synthase subunit delta (178 aa).

Belongs to the ATPase delta chain family. F-type ATPases have 2 components, F(1) - the catalytic core - and F(0) - the membrane proton channel. F(1) has five subunits: alpha(3), beta(3), gamma(1), delta(1), epsilon(1). F(0) has three main subunits: a(1), b(2) and c(10-14). The alpha and beta chains form an alternating ring which encloses part of the gamma chain. F(1) is attached to F(0) by a central stalk formed by the gamma and epsilon chains, while a peripheral stalk is formed by the delta and b chains.

The protein localises to the cell inner membrane. F(1)F(0) ATP synthase produces ATP from ADP in the presence of a proton or sodium gradient. F-type ATPases consist of two structural domains, F(1) containing the extramembraneous catalytic core and F(0) containing the membrane proton channel, linked together by a central stalk and a peripheral stalk. During catalysis, ATP synthesis in the catalytic domain of F(1) is coupled via a rotary mechanism of the central stalk subunits to proton translocation. In terms of biological role, this protein is part of the stalk that links CF(0) to CF(1). It either transmits conformational changes from CF(0) to CF(1) or is implicated in proton conduction. The sequence is that of ATP synthase subunit delta from Marinomonas sp. (strain MWYL1).